Here is a 362-residue protein sequence, read N- to C-terminus: Mitochondrial distribution and morphology protein 12 (362 aa).

An SMP-LTD domain is found at 1–361 (MSFDINWSQL…WPSWLCFDMS (361 aa)). Disordered stretches follow at residues 65-141 (DFYE…AATP) and 170-207 (TPSG…SKRG). Composition is skewed to polar residues over residues 106 to 119 (VTLS…TQFA) and 170 to 187 (TPSG…MRTG). Residues 192–201 (PISNTPISSS) are compositionally biased toward low complexity.

It belongs to the MDM12 family. Component of the ER-mitochondria encounter structure (ERMES) or MDM complex, composed of MMM1, MDM10, MDM12 and MDM34. An MMM1 homodimer associates with one molecule of MDM12 on each side in a pairwise head-to-tail manner, and the SMP-LTD domains of MMM1 and MDM12 generate a continuous hydrophobic tunnel for phospholipid trafficking.

The protein localises to the mitochondrion outer membrane. The protein resides in the endoplasmic reticulum membrane. Its function is as follows. Component of the ERMES/MDM complex, which serves as a molecular tether to connect the endoplasmic reticulum (ER) and mitochondria. Components of this complex are involved in the control of mitochondrial shape and protein biogenesis, and function in nonvesicular lipid trafficking between the ER and mitochondria. MDM12 is required for the interaction of the ER-resident membrane protein MMM1 and the outer mitochondrial membrane-resident beta-barrel protein MDM10. The MDM12-MMM1 subcomplex functions in the major beta-barrel assembly pathway that is responsible for biogenesis of all mitochondrial outer membrane beta-barrel proteins, and acts in a late step after the SAM complex. The MDM10-MDM12-MMM1 subcomplex further acts in the TOM40-specific pathway after the action of the MDM12-MMM1 complex. Essential for establishing and maintaining the structure of mitochondria and maintenance of mtDNA nucleoids. This chain is Mitochondrial distribution and morphology protein 12, found in Meyerozyma guilliermondii (strain ATCC 6260 / CBS 566 / DSM 6381 / JCM 1539 / NBRC 10279 / NRRL Y-324) (Yeast).